The following is a 67-amino-acid chain: Conotoxin Cl14c (67 aa).

Positions 1-20 (MNVTVMFLVLLLLTMPLTDG) are cleaved as a signal peptide. The propeptide occupies 21 to 48 (FNIRATNGGELFGPVQRDAGNVLDHGFQ).

It belongs to the conotoxin L superfamily. Contains 2 disulfide bonds. Expressed by the venom duct.

It localises to the secreted. This is Conotoxin Cl14c from Californiconus californicus (California cone).